A 2678-amino-acid chain; its full sequence is Mediator of RNA polymerase II transcription subunit 13 (2678 aa).

Disordered regions lie at residues 1–52 (MMGT…GYNS), 140–285 (SKKP…QPIS), 495–524 (NSNN…QQQQ), 553–615 (QQQQ…NNNI), 852–993 (SPSS…QQQQ), 1070–1253 (TSHY…KPFL), 1278–1394 (LPHN…QDES), 1462–1502 (SPFS…NNHH), 1806–1838 (FSGS…SMDD), 2075–2105 (QNQN…QTQT), 2225–2307 (SSSS…QEQK), and 2656–2678 (KLTP…SNNT). Low complexity-rich tracts occupy residues 15 to 48 (SGSN…PTTS), 144 to 162 (INNS…TDSS), and 169 to 186 (NSPS…NSNN). The segment covering 187–206 (VTKDSPPNATNKMSTSPKSL) has biased composition (polar residues). Positions 207–276 (SPTISNNNNN…SPPTVASVTS (70 aa)) are enriched in low complexity. Composition is skewed to low complexity over residues 553-573 (QQQQ…DNNN) and 587-615 (SSSS…NNNI). Over residues 855–872 (SPLTQHPSSPHSPFNNVN) the composition is skewed to polar residues. Residues 901–916 (KKRHGKSQKKGRSSKR) show a composition bias toward basic residues. Positions 922–950 (SNNNNNNNTTTTSTITATTTTTTPTAATT) are enriched in low complexity. Polar residues-rich tracts occupy residues 966-979 (NIQE…LTTV) and 1079-1090 (PTQNGSQKNNQR). A compositionally biased stretch (low complexity) spans 1109–1150 (TTTTTTTTTTTPTPNPTTTTTQPQTQPQQQSQQQQQPQQTNP). Positions 1151-1195 (ILPTNSNLITNQKPQQYQPPLQDPFQSIDSQQPKSIQSPTLTNQP) are enriched in polar residues. The segment covering 1201–1211 (PTLTNQPLQQY) has biased composition (low complexity). A compositionally biased stretch (polar residues) spans 1281–1306 (NTEQSPSNDDLSNPNHLHHGTPTSAI). A compositionally biased stretch (low complexity) spans 1312–1321 (SSSSSGNNMI). Over residues 1322–1343 (GSGGIVGSGGGNTNVSGSGGGM) the composition is skewed to gly residues. Positions 1359–1371 (PHHHHHHHHHHHP) are enriched in basic residues. Low complexity predominate over residues 1475 to 1497 (TTTNNNNNHNNNNNNNHPNNHHQ). Residues 1806-1819 (FSGSSGLNNSNDRN) show a composition bias toward polar residues. Residues 2658-2678 (TPNSKQSPSPINSPHLNSNNT) are compositionally biased toward polar residues.

This sequence belongs to the Mediator complex subunit 13 family. In terms of assembly, component of the Mediator complex.

It is found in the nucleus. In terms of biological role, component of the Mediator complex, a coactivator involved in the regulated transcription of nearly all RNA polymerase II-dependent genes. Mediator functions as a bridge to convey information from gene-specific regulatory proteins to the basal RNA polymerase II transcription machinery. Mediator is recruited to promoters by direct interactions with regulatory proteins and serves as a scaffold for the assembly of a functional preinitiation complex with RNA polymerase II and the general transcription factors. Required for the starvation-induced activation of the ACA (adenylyl cyclase) expression pathway at the growth/differentiation transition. In Dictyostelium discoideum (Social amoeba), this protein is Mediator of RNA polymerase II transcription subunit 13 (amiB).